A 131-amino-acid polypeptide reads, in one-letter code: Small ribosomal subunit protein uS9 (131 aa).

This sequence belongs to the universal ribosomal protein uS9 family.

The protein is Small ribosomal subunit protein uS9 of Actinobacillus succinogenes (strain ATCC 55618 / DSM 22257 / CCUG 43843 / 130Z).